The following is a 163-amino-acid chain: Nucleotide-binding protein BA_1166 (163 aa).

This sequence belongs to the YajQ family.

In terms of biological role, nucleotide-binding protein. This is Nucleotide-binding protein BA_1166 from Bacillus anthracis.